Consider the following 251-residue polypeptide: Malonyl-[acyl-carrier protein] O-methyltransferase (251 aa).

The protein belongs to the methyltransferase superfamily.

The enzyme catalyses malonyl-[ACP] + S-adenosyl-L-methionine = malonyl-[ACP] methyl ester + S-adenosyl-L-homocysteine. It participates in cofactor biosynthesis; biotin biosynthesis. In terms of biological role, converts the free carboxyl group of a malonyl-thioester to its methyl ester by transfer of a methyl group from S-adenosyl-L-methionine (SAM). It allows to synthesize pimeloyl-ACP via the fatty acid synthetic pathway. The polypeptide is Malonyl-[acyl-carrier protein] O-methyltransferase (Pseudescherichia vulneris (Escherichia vulneris)).